We begin with the raw amino-acid sequence, 95 residues long: uncharacterized protein (95 aa).

This is an uncharacterized protein from Acheta domesticus (House cricket).